A 356-amino-acid chain; its full sequence is Phenylalanine--tRNA ligase alpha subunit (356 aa).

Glu260 contacts Mg(2+).

Belongs to the class-II aminoacyl-tRNA synthetase family. Phe-tRNA synthetase alpha subunit type 1 subfamily. As to quaternary structure, tetramer of two alpha and two beta subunits. It depends on Mg(2+) as a cofactor.

The protein resides in the cytoplasm. It carries out the reaction tRNA(Phe) + L-phenylalanine + ATP = L-phenylalanyl-tRNA(Phe) + AMP + diphosphate + H(+). In Gluconacetobacter diazotrophicus (strain ATCC 49037 / DSM 5601 / CCUG 37298 / CIP 103539 / LMG 7603 / PAl5), this protein is Phenylalanine--tRNA ligase alpha subunit.